A 189-amino-acid chain; its full sequence is Recombination protein RecR (189 aa).

A C4-type zinc finger spans residues 48 to 63 (CQTCFHLSAEPLCDIC). Positions 71 to 165 (QLLCVVADSR…QVSRIAYGLP (95 aa)) constitute a Toprim domain.

This sequence belongs to the RecR family.

Functionally, may play a role in DNA repair. It seems to be involved in an RecBC-independent recombinational process of DNA repair. It may act with RecF and RecO. This chain is Recombination protein RecR, found in Prochlorococcus marinus (strain MIT 9313).